A 366-amino-acid polypeptide reads, in one-letter code: Inositol 2-dehydrogenase (366 aa).

Belongs to the Gfo/Idh/MocA family. Homotetramer.

The catalysed reaction is myo-inositol + NAD(+) = scyllo-inosose + NADH + H(+). Its function is as follows. Involved in the oxidation of myo-inositol (MI) to 2-keto-myo-inositol (2KMI or 2-inosose). In Rhodococcus jostii (strain RHA1), this protein is Inositol 2-dehydrogenase.